Reading from the N-terminus, the 1173-residue chain is SMC5-SMC6 complex localization factor protein 2 (1173 aa).

The interval 1–109 (MTRRCMPARP…KPKRVPPEKS (109 aa)) is disordered. Basic and acidic residues-rich tracts occupy residues 39 to 50 (KRTESPGDRKQS) and 88 to 106 (QFERKLSSPKESKPKRVPP). The APIM motif motif lies at 137 to 149 (SLASKYLAKGTNI). Disordered stretches follow at residues 161-230 (MKSL…PEES), 256-275 (QMEQRINSENSFSEASSLSL), 280-373 (ERKY…QKEK), 394-620 (KEPS…EEET), and 635-663 (TPAATGKPPALSKGLRSQSSDYTGHVHPG). A compositionally biased stretch (basic and acidic residues) spans 181 to 199 (ENNEKNDRDRGKTNADSKK). Low complexity-rich tracts occupy residues 212-221 (SSRSLSSRSS) and 262-275 (NSENSFSEASSLSL). Basic and acidic residues predominate over residues 280 to 293 (ERKYKPRQEQRKQN). Residues 317 to 330 (SDSWEPTSAGSKQN) are compositionally biased toward polar residues. 2 stretches are compositionally biased toward basic and acidic residues: residues 339–349 (NSVDSDLKSTR) and 355–373 (KARESFLEKRPDGPHQKEK). Polar residues predominate over residues 409–428 (PSNSGNSGHHSTRNSDQIQV). Ser481 is modified (phosphoserine). A compositionally biased stretch (basic and acidic residues) spans 499-520 (SKKDKERSSSKECSGHSTESTK). Residues 571–592 (APSDKAPSEGESSGNSNAGSSA) show a composition bias toward low complexity. Residues 602–619 (DSDEESLGYNLDSDEEEE) show a composition bias toward acidic residues. 3 positions are modified to phosphoserine: Ser603, Ser607, and Ser614. The segment at 635-1173 (TPAATGKPPA…QLHDFWVPDS (539 aa)) is interaction with SIMC1. Residues 664-1166 (TYTNTLERLV…NCRPTQGQLH (503 aa)) form an NSE6-like domain region. A required for interaction with SLF1 and RAD18 region spans residues 702–1173 (PIRIGEEDST…QLHDFWVPDS (472 aa)).

It belongs to the FAM178 family. Forms a heterodimer with SIMC1. Interacts with SLF1 (via N-terminus); this interaction links RAD18 to the SMC5-SMC6 complex. Interacts with RAD18; this interaction is increased in a SLF1-dependent manner. Interacts with SMC5 and SMC6. Widely expressed. Expressed at higher level in skeletal muscle and at slightly lower level in brain, liver and heart, than in lung, kidney, spleen and thymus.

Its subcellular location is the nucleus. It localises to the PML body. In terms of biological role, plays a role in the DNA damage response (DDR) pathway by regulating postreplication repair of UV-damaged DNA and genomic stability maintenance. The SLF1-SLF2 complex acts to link RAD18 with the SMC5-SMC6 complex at replication-coupled interstrand cross-links (ICL) and DNA double-strand breaks (DSBs) sites on chromatin during DNA repair in response to stalled replication forks. Promotes the recruitment of the SMC5-SMC6 complex to DNA lesions. Plays a role in SMC5-SMC6 complex recruitment for viral restriction. Forms a complex with SIMC1 and this complex is required to recruit SMC5-SMC6 complex to PML nuclear bodies and sites of viral replication. This chain is SMC5-SMC6 complex localization factor protein 2, found in Homo sapiens (Human).